Reading from the N-terminus, the 172-residue chain is UPF0102 protein AM1_3954 (172 aa).

It belongs to the UPF0102 family.

This Acaryochloris marina (strain MBIC 11017) protein is UPF0102 protein AM1_3954.